The sequence spans 439 residues: Diaminopimelate decarboxylase (439 aa).

Lysine 66 carries the N6-(pyridoxal phosphate)lysine modification. Residues glycine 248 and 290–293 each bind pyridoxal 5'-phosphate; that span reads EPGR. 3 residues coordinate substrate: arginine 293, arginine 330, and tyrosine 334. Cysteine 361 acts as the Proton donor in catalysis. The substrate site is built by glutamate 362 and tyrosine 390. Residue tyrosine 390 coordinates pyridoxal 5'-phosphate.

This sequence belongs to the Orn/Lys/Arg decarboxylase class-II family. LysA subfamily. As to quaternary structure, homodimer. Pyridoxal 5'-phosphate is required as a cofactor.

It catalyses the reaction meso-2,6-diaminopimelate + H(+) = L-lysine + CO2. Its pathway is amino-acid biosynthesis; L-lysine biosynthesis via DAP pathway; L-lysine from DL-2,6-diaminopimelate: step 1/1. Functionally, specifically catalyzes the decarboxylation of meso-diaminopimelate (meso-DAP) to L-lysine. The polypeptide is Diaminopimelate decarboxylase (Bacillus subtilis (strain 168)).